A 420-amino-acid chain; its full sequence is UDP-N-acetylglucosamine 1-carboxyvinyltransferase (420 aa).

Phosphoenolpyruvate is bound at residue 22-23; that stretch reads KN. Arg-91 provides a ligand contact to UDP-N-acetyl-alpha-D-glucosamine. Cys-115 (proton donor) is an active-site residue. 2-(S-cysteinyl)pyruvic acid O-phosphothioketal is present on Cys-115. Residues 120–124, 160–163, Asp-305, and Ile-327 contribute to the UDP-N-acetyl-alpha-D-glucosamine site; these read RPVDL and KVSV.

It belongs to the EPSP synthase family. MurA subfamily.

The protein resides in the cytoplasm. It catalyses the reaction phosphoenolpyruvate + UDP-N-acetyl-alpha-D-glucosamine = UDP-N-acetyl-3-O-(1-carboxyvinyl)-alpha-D-glucosamine + phosphate. The protein operates within cell wall biogenesis; peptidoglycan biosynthesis. Cell wall formation. Adds enolpyruvyl to UDP-N-acetylglucosamine. This Erwinia tasmaniensis (strain DSM 17950 / CFBP 7177 / CIP 109463 / NCPPB 4357 / Et1/99) protein is UDP-N-acetylglucosamine 1-carboxyvinyltransferase.